The chain runs to 79 residues: Cytochrome c oxidase subunit 7A1, mitochondrial (79 aa).

The transit peptide at 1–21 (MQALRVSRALIRSFNTTARNR) directs the protein to the mitochondrion. Topologically, residues 22 to 46 (FQNRVPEKQKLFQEDNDIPLYLKGG) are mitochondrial matrix. The chain crosses the membrane as a helical span at residues 47-75 (IVDNILYRVTMGLCLGGSAYSMYCLGWAS). Topologically, residues 76-79 (FPRN) are mitochondrial intermembrane.

It belongs to the cytochrome c oxidase VIIa family. Component of the complex IV (CIV, cytochrome c oxidase), a multisubunit enzyme composed of 14 subunits. The complex is composed of a catalytic core of 3 subunits MT-CO1, MT-CO2 and MT-CO3, encoded in the mitochondrial DNA, and 11 supernumerary subunits COX4I1 (or COX4I2), COX5A, COX5B, COX6A2 (or COX6A1), COX6B1 (or COX6B2), COX6C, COX7A1 (or COX7A2), COX7B, COX7C, COX8B and NDUFA4, which are encoded in the nuclear genome. The complex exists as a monomer or a dimer and forms supercomplexes (SCs) in the inner mitochondrial membrane with NADH-ubiquinone oxidoreductase (complex I, CI) and ubiquinol-cytochrome c oxidoreductase (cytochrome b-c1 complex, complex III, CIII), resulting in different assemblies (supercomplex SCI(1)III(2)IV(1) and megacomplex MCI(2)III(2)IV(2)).

It localises to the mitochondrion inner membrane. It participates in energy metabolism; oxidative phosphorylation. Component of the mitochondrial respiratory complex IV (CIV, also named cytochrome c oxidase complex), the last enzyme in the mitochondrial electron transport chain which drives oxidative phosphorylation. The CIV complex is the component of the respiratory chain that catalyzes the reduction of oxygen to water. Acts as an assembly factor that specifically drives the homodimerization of CIV complexes, mediating the formation of mitochondrial respiratory supercomplexes (respirasomes) containing two CIV: supercomplxes with two molecules of CIV show improved activity. Despite being highly expressed in brown adipose tissue, not required for thermogenesis. In Trachypithecus cristatus (Silvered leaf-monkey), this protein is Cytochrome c oxidase subunit 7A1, mitochondrial (COX7A1).